The chain runs to 528 residues: Capsule biosynthesis protein CapD proenzyme (528 aa).

The N-terminal stretch at 1–26 is a signal peptide; it reads MNSFKWGKKIILFCLIVSLMGGIGVS. T352 serves as the catalytic Nucleophile. Residues T352, 429–432, and R520 each bind poly-gamma-D-glutamate; that span reads GGNR.

This sequence belongs to the gamma-glutamyltransferase family. This enzyme consists of two polypeptide chains, which are synthesized in precursor form from a single polypeptide. Cleaved by autocatalysis into a large and a small subunit.

The protein operates within capsule biogenesis; capsule polysaccharide biosynthesis. Its function is as follows. Transpeptidase that cleaves the poly-gamma-D-glutamate capsule and catalyzes the formation of an amide bond with the side-chain amino group of meso-diaminopimelic acid (m-DAP) in the peptidoglycan scaffold. Degradation of the high-molecular weight capsule (H-capsule) to the lower-molecular weight capsule (L-capsule), which is released from the bacterial cell surface. The production of L-capsule is essential to mediate escape from host defenses. The protein is Capsule biosynthesis protein CapD proenzyme (capD) of Bacillus anthracis.